The chain runs to 118 residues: D-dopachrome decarboxylase (118 aa).

N-acetylproline is present on proline 2.

Belongs to the MIF family. In terms of assembly, homotrimer.

The protein resides in the cytoplasm. It carries out the reaction D-dopachrome + H(+) = 5,6-dihydroxyindole + CO2. Tautomerization of D-dopachrome with decarboxylation to give 5,6-dihydroxyindole (DHI). The polypeptide is D-dopachrome decarboxylase (ddt) (Xenopus tropicalis (Western clawed frog)).